The sequence spans 273 residues: Large ribosomal subunit protein uL2 (273 aa).

Disordered stretches follow at residues 35 to 54 (DKKD…TRHI) and 222 to 273 (GMAM…RRNK). Basic and acidic residues predominate over residues 229–239 (DHPHGGGEGRN). Over residues 253–273 (KGFKTRKNKRTDKYIVRRRNK) the composition is skewed to basic residues.

The protein belongs to the universal ribosomal protein uL2 family. Part of the 50S ribosomal subunit. Forms a bridge to the 30S subunit in the 70S ribosome.

Functionally, one of the primary rRNA binding proteins. Required for association of the 30S and 50S subunits to form the 70S ribosome, for tRNA binding and peptide bond formation. It has been suggested to have peptidyltransferase activity; this is somewhat controversial. Makes several contacts with the 16S rRNA in the 70S ribosome. The polypeptide is Large ribosomal subunit protein uL2 (Aeromonas hydrophila subsp. hydrophila (strain ATCC 7966 / DSM 30187 / BCRC 13018 / CCUG 14551 / JCM 1027 / KCTC 2358 / NCIMB 9240 / NCTC 8049)).